Consider the following 147-residue polypeptide: Globin, major polymeric component P1 (147 aa).

The 145-residue stretch at 2–146 folds into the Globin domain; that stretch reads HLTADQVAAL…ISDACIAGLQ (145 aa). H96 serves as a coordination point for heme b.

The protein belongs to the globin family. In terms of assembly, polymer.

This Glycera dibranchiata (Bloodworm) protein is Globin, major polymeric component P1.